A 593-amino-acid polypeptide reads, in one-letter code: Probable translation initiation factor IF-2 (593 aa).

The tr-type G domain maps to 7-221 (IRTPIVCVMG…VLIGLAQRYM (215 aa)). Residues 16–23 (GHVDHGKT) form a G1 region. 16-23 (GHVDHGKT) is a GTP binding site. Positions 41–45 (EITQH) are G2. Residues 77–80 (DTPG) form a G3 region. Residues 77-81 (DTPGH) and 131-134 (NKVD) each bind GTP. The interval 131-134 (NKVD) is G4. The G5 stretch occupies residues 199–201 (SAL).

The protein belongs to the TRAFAC class translation factor GTPase superfamily. Classic translation factor GTPase family. IF-2 subfamily.

Function in general translation initiation by promoting the binding of the formylmethionine-tRNA to ribosomes. Seems to function along with eIF-2. In Methanoculleus marisnigri (strain ATCC 35101 / DSM 1498 / JR1), this protein is Probable translation initiation factor IF-2.